An 83-amino-acid polypeptide reads, in one-letter code: Cytochrome c oxidase subunit 7A2, mitochondrial (83 aa).

The N-terminal 23 residues, 1–23 (MLRNLLALRQIGQRTISTASRRH), are a transit peptide targeting the mitochondrion. At 24–48 (FKNKVPEKQKLFQEDDEIPLYLKGG) the chain is on the mitochondrial matrix side. K33 is modified (N6-acetyllysine). The helical transmembrane segment at 49–77 (VADALLYRATMILTVGGTAYAIYELAVAS) threads the bilayer. The Mitochondrial intermembrane segment spans residues 78–83 (FPKKQE).

It belongs to the cytochrome c oxidase VIIa family. Component of the cytochrome c oxidase (complex IV, CIV), a multisubunit enzyme composed of 14 subunits. The complex is composed of a catalytic core of 3 subunits MT-CO1, MT-CO2 and MT-CO3, encoded in the mitochondrial DNA, and 11 supernumerary subunits COX4I1 (or COX4I2), COX5A, COX5B, COX6A1 (or COX6A2), COX6B1 (or COX6B2), COX6C, COX7A2 (or COX7A1), COX7B, COX7C, COX8A and NDUFA4, which are encoded in the nuclear genome. The complex exists as a monomer or a dimer and forms supercomplexes (SCs) in the inner mitochondrial membrane with NADH-ubiquinone oxidoreductase (complex I, CI) and ubiquinol-cytochrome c oxidoreductase (cytochrome b-c1 complex, complex III, CIII), resulting in different assemblies (supercomplex SCI(1)III(2)IV(1) and megacomplex MCI(2)III(2)IV(2)). Interacts with PET100.

Its subcellular location is the mitochondrion inner membrane. The protein operates within energy metabolism; oxidative phosphorylation. Component of the cytochrome c oxidase, the last enzyme in the mitochondrial electron transport chain which drives oxidative phosphorylation. The respiratory chain contains 3 multisubunit complexes succinate dehydrogenase (complex II, CII), ubiquinol-cytochrome c oxidoreductase (cytochrome b-c1 complex, complex III, CIII) and cytochrome c oxidase (complex IV, CIV), that cooperate to transfer electrons derived from NADH and succinate to molecular oxygen, creating an electrochemical gradient over the inner membrane that drives transmembrane transport and the ATP synthase. Cytochrome c oxidase is the component of the respiratory chain that catalyzes the reduction of oxygen to water. Electrons originating from reduced cytochrome c in the intermembrane space (IMS) are transferred via the dinuclear copper A center (CU(A)) of subunit 2 and heme A of subunit 1 to the active site in subunit 1, a binuclear center (BNC) formed by heme A3 and copper B (CU(B)). The BNC reduces molecular oxygen to 2 water molecules using 4 electrons from cytochrome c in the IMS and 4 protons from the mitochondrial matrix. This Homo sapiens (Human) protein is Cytochrome c oxidase subunit 7A2, mitochondrial (COX7A2).